Here is a 669-residue protein sequence, read N- to C-terminus: L-type lectin-domain containing receptor kinase IV.4 (669 aa).

An N-terminal signal peptide occupies residues M1 to S23. Residues Q24–W294 are Extracellular-facing. The segment at I26 to F260 is legume-lectin like. N58, N80, N127, N152, and N185 each carry an N-linked (GlcNAc...) asparagine glycan. The chain crosses the membrane as a helical span at residues V295 to I315. Over M316 to R669 the chain is Cytoplasmic. A Protein kinase domain is found at F350–L627. ATP is bound by residues L356–V364 and K379. D475 acts as the Proton acceptor in catalysis.

It in the C-terminal section; belongs to the protein kinase superfamily. Ser/Thr protein kinase family. The protein in the N-terminal section; belongs to the leguminous lectin family.

The protein resides in the cell membrane. It carries out the reaction L-seryl-[protein] + ATP = O-phospho-L-seryl-[protein] + ADP + H(+). It catalyses the reaction L-threonyl-[protein] + ATP = O-phospho-L-threonyl-[protein] + ADP + H(+). Functionally, involved in resistance response to the pathogenic oomycetes Phytophthora infestans and Phytophthora capsici and to the pathogenic bacteria Pseudomonas syringae. The polypeptide is L-type lectin-domain containing receptor kinase IV.4 (Arabidopsis thaliana (Mouse-ear cress)).